The sequence spans 1433 residues: Gag-Pol polyprotein (1433 aa).

A lipid anchor (N-myristoyl glycine; by host) is attached at glycine 2. The tract at residues 7 to 31 (VLTGGKLDAWEKIRLRPGGRKSYKI) is interaction with Gp41. The interval 8–43 (LTGGKLDAWEKIRLRPGGRKSYKIKHLVWASRELER) is interaction with host CALM1. Positions 12–19 (KLDAWEKI) are interaction with host AP3D1. Residues 14–33 (DAWEKIRLRPGGRKSYKIKH) are interaction with membrane phosphatidylinositol 4,5-bisphosphate and RNA. The Nuclear export signal signature appears at 16–22 (WEKIRLR). Positions 26 to 32 (RKSYKIK) match the Nuclear localization signal motif. Residues 73-77 (EEIKS) are interaction with membrane phosphatidylinositol 4,5-bisphosphate. Tyrosine 132 bears the Phosphotyrosine; by host mark. The tract at residues 189–227 (NTVGGHQAAMQMLKDTINEEAAEWDRMHPQQAGPFPPGQ) is interaction with human PPIA/CYPA and NUP153. The interval 277-363 (YSPVSILDIR…GGPSHKARVL (87 aa)) is dimerization/Multimerization of capsid protein p24. 2 consecutive CCHC-type zinc fingers follow at residues 391–408 (IKCF…NCRA) and 412–429 (KGCW…DCTE). Positions 445 to 455 (EAREFSSEQDR) are enriched in basic and acidic residues. The disordered stretch occupies residues 445-481 (EAREFSSEQDRTNSPTCRKPRVRRGDSPLPEAGDEGK). A dimerization of protease region spans residues 487–491 (PQITL). The 70-residue stretch at 506–575 (IEALLDTGAD…TPINIIGRNM (70 aa)) folds into the Peptidase A2 domain. Aspartate 511 (for protease activity; shared with dimeric partner) is an active-site residue. Dimerization of protease stretches follow at residues 535-541 (GIGGFIK) and 574-586 (NMLT…LNFP). Residues 629-819 (EGKISKIGPE…PPFLWMGYEL (191 aa)) form the Reverse transcriptase domain. 3 residues coordinate Mg(2+): aspartate 695, aspartate 770, and aspartate 771. The segment at 812 to 820 (FLWMGYELH) is RT 'primer grip'. The Tryptophan repeat motif signature appears at 983 to 999 (WEIWWTDYWQATWIPEW). An RNase H type-1 domain is found at 1019 to 1142 (IPGAETYYVD…VDKLVSSGIR (124 aa)). The Mg(2+) site is built by aspartate 1028, glutamate 1063, aspartate 1083, and aspartate 1134. The Integrase-type zinc-finger motif lies at 1148–1189 (DGIDKAQEEHERYHNNWRAMASDFNLPPIVAKEIVASCDKCQ). Residues histidine 1157, histidine 1161, cysteine 1185, and cysteine 1188 each contribute to the Zn(2+) site. One can recognise an Integrase catalytic domain in the interval 1199 to 1349 (VDCSPGIWQL…SAGERIIDII (151 aa)). Aspartate 1209, aspartate 1261, and glutamate 1297 together coordinate Mg(2+). Residues 1368 to 1415 (FRVYYRDSRDPVWKGPAKLLWKGEGAVVIQDNNEIKVVPRRKAKIIRD) constitute a DNA-binding region (integrase-type).

As to quaternary structure, homotrimer; further assembles as hexamers of trimers. Interacts with gp41 (via C-terminus). Interacts with host CALM1; this interaction induces a conformational change in the Matrix protein, triggering exposure of the myristate group. Interacts with host AP3D1; this interaction allows the polyprotein trafficking to multivesicular bodies during virus assembly. Part of the pre-integration complex (PIC) which is composed of viral genome, matrix protein, Vpr and integrase. Homodimer; the homodimer further multimerizes as homohexamers or homopentamers. Interacts with human PPIA/CYPA; This interaction stabilizes the capsid. Interacts with human NUP153. Interacts with host PDZD8; this interaction stabilizes the capsid. Interacts with monkey TRIM5; this interaction destabilizes the capsid. In terms of assembly, homodimer, whose active site consists of two apposed aspartic acid residues. As to quaternary structure, heterodimer of p66 RT and p51 RT (RT p66/p51). Heterodimerization of RT is essential for DNA polymerase activity. The overall folding of the subdomains is similar in p66 RT and p51 RT but the spatial arrangements of the subdomains are dramatically different. Homotetramer; may further associate as a homohexadecamer. Part of the pre-integration complex (PIC) which is composed of viral genome, matrix protein, Vpr and integrase. Interacts with human SMARCB1/INI1 and human PSIP1/LEDGF isoform 1. Interacts with human KPNA3; this interaction might play a role in nuclear import of the pre-integration complex. Interacts with human NUP153; this interaction might play a role in nuclear import of the pre-integration complex. It depends on Mg(2+) as a cofactor. Specific enzymatic cleavages by the viral protease yield mature proteins. The protease is released by autocatalytic cleavage. The polyprotein is cleaved during and after budding, this process is termed maturation. Proteolytic cleavage of p66 RT removes the RNase H domain to yield the p51 RT subunit. Nucleocapsid protein p7 might be further cleaved after virus entry. In terms of processing, tyrosine phosphorylated presumably in the virion by a host kinase. Phosphorylation is apparently not a major regulator of membrane association. Post-translationally, phosphorylated possibly by host MAPK1; this phosphorylation is necessary for Pin1-mediated virion uncoating. Methylated by host PRMT6, impairing its function by reducing RNA annealing and the initiation of reverse transcription.

The protein localises to the host cell membrane. It localises to the host endosome. The protein resides in the host multivesicular body. Its subcellular location is the virion membrane. It is found in the host nucleus. The protein localises to the host cytoplasm. It localises to the virion. The catalysed reaction is Specific for a P1 residue that is hydrophobic, and P1' variable, but often Pro.. It carries out the reaction Endohydrolysis of RNA in RNA/DNA hybrids. Three different cleavage modes: 1. sequence-specific internal cleavage of RNA. Human immunodeficiency virus type 1 and Moloney murine leukemia virus enzymes prefer to cleave the RNA strand one nucleotide away from the RNA-DNA junction. 2. RNA 5'-end directed cleavage 13-19 nucleotides from the RNA end. 3. DNA 3'-end directed cleavage 15-20 nucleotides away from the primer terminus.. It catalyses the reaction 3'-end directed exonucleolytic cleavage of viral RNA-DNA hybrid.. The enzyme catalyses DNA(n) + a 2'-deoxyribonucleoside 5'-triphosphate = DNA(n+1) + diphosphate. Protease: The viral protease is inhibited by many synthetic protease inhibitors (PIs), such as amprenavir, atazanavir, indinavir, loprinavir, nelfinavir, ritonavir and saquinavir. Use of protease inhibitors in tritherapy regimens permit more ambitious therapeutic strategies. Reverse transcriptase/ribonuclease H: RT can be inhibited either by nucleoside RT inhibitors (NRTIs) or by non nucleoside RT inhibitors (NNRTIs). NRTIs act as chain terminators, whereas NNRTIs inhibit DNA polymerization by binding a small hydrophobic pocket near the RT active site and inducing an allosteric change in this region. Classical NRTIs are abacavir, adefovir (PMEA), didanosine (ddI), lamivudine (3TC), stavudine (d4T), tenofovir (PMPA), zalcitabine (ddC), and zidovudine (AZT). Classical NNRTIs are atevirdine (BHAP U-87201E), delavirdine, efavirenz (DMP-266), emivirine (I-EBU), and nevirapine (BI-RG-587). The tritherapies used as a basic effective treatment of AIDS associate two NRTIs and one NNRTI. Functionally, mediates, with Gag polyprotein, the essential events in virion assembly, including binding the plasma membrane, making the protein-protein interactions necessary to create spherical particles, recruiting the viral Env proteins, and packaging the genomic RNA via direct interactions with the RNA packaging sequence (Psi). Gag-Pol polyprotein may regulate its own translation, by the binding genomic RNA in the 5'-UTR. At low concentration, the polyprotein would promote translation, whereas at high concentration, the polyprotein would encapsidate genomic RNA and then shut off translation. In terms of biological role, targets the polyprotein to the plasma membrane via a multipartite membrane-binding signal, that includes its myristoylated N-terminus. Matrix protein is part of the pre-integration complex. Implicated in the release from host cell mediated by Vpu. Binds to RNA. Its function is as follows. Forms the conical core that encapsulates the genomic RNA-nucleocapsid complex in the virion. Most core are conical, with only 7% tubular. The core is constituted by capsid protein hexamer subunits. The core is disassembled soon after virion entry. Host restriction factors such as TRIM5-alpha or TRIMCyp bind retroviral capsids and cause premature capsid disassembly, leading to blocks in reverse transcription. Capsid restriction by TRIM5 is one of the factors which restricts HIV-1 to the human species. Host PIN1 apparently facilitates the virion uncoating. On the other hand, interactions with PDZD8 or CYPA stabilize the capsid. Encapsulates and protects viral dimeric unspliced genomic RNA (gRNA). Binds these RNAs through its zinc fingers. Acts as a nucleic acid chaperone which is involved in rearangement of nucleic acid secondary structure during gRNA retrotranscription. Also facilitates template switch leading to recombination. As part of the polyprotein, participates in gRNA dimerization, packaging, tRNA incorporation and virion assembly. Functionally, aspartyl protease that mediates proteolytic cleavages of Gag and Gag-Pol polyproteins during or shortly after the release of the virion from the plasma membrane. Cleavages take place as an ordered, step-wise cascade to yield mature proteins. This process is called maturation. Displays maximal activity during the budding process just prior to particle release from the cell. Also cleaves Nef and Vif, probably concomitantly with viral structural proteins on maturation of virus particles. Hydrolyzes host EIF4GI and PABP1 in order to shut off the capped cellular mRNA translation. The resulting inhibition of cellular protein synthesis serves to ensure maximal viral gene expression and to evade host immune response. Also mediates cleavage of host YTHDF3. Mediates cleavage of host CARD8, thereby activating the CARD8 inflammasome, leading to the clearance of latent HIV-1 in patient CD4(+) T-cells after viral reactivation; in contrast, HIV-1 can evade CARD8-sensing when its protease remains inactive in infected cells prior to viral budding. In terms of biological role, multifunctional enzyme that converts the viral RNA genome into dsDNA in the cytoplasm, shortly after virus entry into the cell. This enzyme displays a DNA polymerase activity that can copy either DNA or RNA templates, and a ribonuclease H (RNase H) activity that cleaves the RNA strand of RNA-DNA heteroduplexes in a partially processive 3' to 5' endonucleasic mode. Conversion of viral genomic RNA into dsDNA requires many steps. A tRNA(3)-Lys binds to the primer-binding site (PBS) situated at the 5'-end of the viral RNA. RT uses the 3' end of the tRNA primer to perform a short round of RNA-dependent minus-strand DNA synthesis. The reading proceeds through the U5 region and ends after the repeated (R) region which is present at both ends of viral RNA. The portion of the RNA-DNA heteroduplex is digested by the RNase H, resulting in a ssDNA product attached to the tRNA primer. This ssDNA/tRNA hybridizes with the identical R region situated at the 3' end of viral RNA. This template exchange, known as minus-strand DNA strong stop transfer, can be either intra- or intermolecular. RT uses the 3' end of this newly synthesized short ssDNA to perform the RNA-dependent minus-strand DNA synthesis of the whole template. RNase H digests the RNA template except for two polypurine tracts (PPTs) situated at the 5'-end and near the center of the genome. It is not clear if both polymerase and RNase H activities are simultaneous. RNase H probably can proceed both in a polymerase-dependent (RNA cut into small fragments by the same RT performing DNA synthesis) and a polymerase-independent mode (cleavage of remaining RNA fragments by free RTs). Secondly, RT performs DNA-directed plus-strand DNA synthesis using the PPTs that have not been removed by RNase H as primers. PPTs and tRNA primers are then removed by RNase H. The 3' and 5' ssDNA PBS regions hybridize to form a circular dsDNA intermediate. Strand displacement synthesis by RT to the PBS and PPT ends produces a blunt ended, linear dsDNA copy of the viral genome that includes long terminal repeats (LTRs) at both ends. Its function is as follows. Catalyzes viral DNA integration into the host chromosome, by performing a series of DNA cutting and joining reactions. This enzyme activity takes place after virion entry into a cell and reverse transcription of the RNA genome in dsDNA. The first step in the integration process is 3' processing. This step requires a complex comprising the viral genome, matrix protein, Vpr and integrase. This complex is called the pre-integration complex (PIC). The integrase protein removes 2 nucleotides from each 3' end of the viral DNA, leaving recessed CA OH's at the 3' ends. In the second step, the PIC enters cell nucleus. This process is mediated through integrase and Vpr proteins, and allows the virus to infect a non dividing cell. This ability to enter the nucleus is specific of lentiviruses, other retroviruses cannot and rely on cell division to access cell chromosomes. In the third step, termed strand transfer, the integrase protein joins the previously processed 3' ends to the 5' ends of strands of target cellular DNA at the site of integration. The 5'-ends are produced by integrase-catalyzed staggered cuts, 5 bp apart. A Y-shaped, gapped, recombination intermediate results, with the 5'-ends of the viral DNA strands and the 3' ends of target DNA strands remaining unjoined, flanking a gap of 5 bp. The last step is viral DNA integration into host chromosome. This involves host DNA repair synthesis in which the 5 bp gaps between the unjoined strands are filled in and then ligated. Since this process occurs at both cuts flanking the HIV genome, a 5 bp duplication of host DNA is produced at the ends of HIV-1 integration. Alternatively, Integrase may catalyze the excision of viral DNA just after strand transfer, this is termed disintegration. The protein is Gag-Pol polyprotein (gag-pol) of Human immunodeficiency virus type 1 group M subtype G (isolate SE6165) (HIV-1).